The sequence spans 213 residues: Ribosomal RNA small subunit methyltransferase G (213 aa).

S-adenosyl-L-methionine contacts are provided by residues Gly77, Met82, 104-106 (EKS), and Arg145.

Belongs to the methyltransferase superfamily. RNA methyltransferase RsmG family.

It localises to the cytoplasm. It catalyses the reaction guanosine(527) in 16S rRNA + S-adenosyl-L-methionine = N(7)-methylguanosine(527) in 16S rRNA + S-adenosyl-L-homocysteine. Functionally, specifically methylates the N7 position of guanine in position 527 of 16S rRNA. This Pelagibacter ubique (strain HTCC1062) protein is Ribosomal RNA small subunit methyltransferase G.